We begin with the raw amino-acid sequence, 355 residues long: Protein RecA (355 aa).

Residue Gly-66–Thr-73 coordinates ATP. The segment at Asp-331–Glu-355 is disordered. Acidic residues predominate over residues Val-332–Gln-344.

This sequence belongs to the RecA family.

The protein localises to the cytoplasm. Functionally, can catalyze the hydrolysis of ATP in the presence of single-stranded DNA, the ATP-dependent uptake of single-stranded DNA by duplex DNA, and the ATP-dependent hybridization of homologous single-stranded DNAs. It interacts with LexA causing its activation and leading to its autocatalytic cleavage. This is Protein RecA from Latilactobacillus sakei subsp. sakei (strain 23K) (Lactobacillus sakei subsp. sakei).